A 103-amino-acid polypeptide reads, in one-letter code: Co-chaperonin GroES (103 aa).

It belongs to the GroES chaperonin family. In terms of assembly, heptamer of 7 subunits arranged in a ring. Interacts with the chaperonin GroEL.

It is found in the cytoplasm. In terms of biological role, together with the chaperonin GroEL, plays an essential role in assisting protein folding. The GroEL-GroES system forms a nano-cage that allows encapsulation of the non-native substrate proteins and provides a physical environment optimized to promote and accelerate protein folding. GroES binds to the apical surface of the GroEL ring, thereby capping the opening of the GroEL channel. This chain is Co-chaperonin GroES, found in Crocosphaera subtropica (strain ATCC 51142 / BH68) (Cyanothece sp. (strain ATCC 51142)).